Here is a 504-residue protein sequence, read N- to C-terminus: Paired zinc finger protein 1 (504 aa).

C2H2-type zinc fingers lie at residues 12 to 35 and 39 to 62; these read LLCGICGKYFSDDESLREHRRQRH and HMCLLCNRRIPENETLREHMKNKH. The C2H2-type 3; degenerate zinc-finger motif lies at 68-91; the sequence is FICVCCNWSFGTEIYLKCHEECMK. Disordered stretches follow at residues 115-136 and 154-173; these read ALNTDPQNGSDDVPHSSPSPVP and IESADRSSASTSTPRTLVSG. Over residues 159–172 the composition is skewed to polar residues; the sequence is RSSASTSTPRTLVS. 2 C2H2-type zinc fingers span residues 179–202 and 206–229; these read IPCGFCGKDFFHEGSLREHRRRFH and HTCLLCNRQIPENETVRDHMKSQH. A C2H2-type 6; degenerate zinc finger spans residues 235 to 258; sequence YNCLCCNWTFLNQVHLISHKTCLK. The C2H2-type 7 zinc-finger motif lies at 309 to 332; sequence LSCKSCGKFFYSERSLSKHHRQIH. A C2H2-type 8; degenerate zinc finger spans residues 365–389; the sequence is FNCRCCNWSFATRRCLMSHVECLKK.

Expressed in proximal gonad.

Its function is as follows. Possible transcriptional regulator. Involved in promoting segregation of chromosomes during meiosis, perhaps acting downstream of the let-60 RAS / mpk-1 MAPK signaling pathway. This is Paired zinc finger protein 1 from Caenorhabditis elegans.